The chain runs to 1021 residues: Caspase recruitment domain-containing protein 10 (1021 aa).

The interval Met1–Glu24 is disordered. Ser18 carries the post-translational modification Phosphoserine. Positions Glu23–Glu115 constitute a CARD domain. A coiled-coil region spans residues Thr138 to Gly450. 3 disordered regions span residues Glu475 to Ile544, Ser597 to Gly616, and Leu790 to Ala809. Basic and acidic residues-rich tracts occupy residues His495–Asn508 and Arg525–Lys535.

In terms of assembly, CARD10 and BCL10 bind to each other by CARD-CARD interaction. They both participate in a complex with MALT1, where MALT1 binds to BCL10. Interacts with TMEM43; this interaction is essential for EGFR-mediated NF-kappa-B activation. Highly expressed in kidney, heart followed by brain, lung, liver, skeletal muscle and testis.

In terms of biological role, scaffold protein that plays an important role in mediating the activation of NF-kappa-B via BCL10 or EGFR. The protein is Caspase recruitment domain-containing protein 10 (Card10) of Mus musculus (Mouse).